The following is a 212-amino-acid chain: Cytidylate kinase (212 aa).

ATP is bound at residue 7–15 (GPAASGKGT).

It belongs to the cytidylate kinase family. Type 1 subfamily.

It localises to the cytoplasm. The catalysed reaction is CMP + ATP = CDP + ADP. It carries out the reaction dCMP + ATP = dCDP + ADP. This Bradyrhizobium diazoefficiens (strain JCM 10833 / BCRC 13528 / IAM 13628 / NBRC 14792 / USDA 110) protein is Cytidylate kinase.